The following is a 522-amino-acid chain: Maturase K (522 aa).

This sequence belongs to the intron maturase 2 family. MatK subfamily.

Its subcellular location is the plastid. It localises to the chloroplast. Usually encoded in the trnK tRNA gene intron. Probably assists in splicing its own and other chloroplast group II introns. This chain is Maturase K, found in Aristea glauca.